Reading from the N-terminus, the 61-residue chain is UPF0434 protein PFLU_3771 (61 aa).

Belongs to the UPF0434 family.

The polypeptide is UPF0434 protein PFLU_3771 (Pseudomonas fluorescens (strain SBW25)).